Consider the following 132-residue polypeptide: S-protein homolog 19 (132 aa).

An N-terminal signal peptide occupies residues Met1–Ala26. Residue Asn87 is glycosylated (N-linked (GlcNAc...) asparagine).

Belongs to the plant self-incompatibility (S1) protein family.

The protein resides in the secreted. This chain is S-protein homolog 19, found in Arabidopsis thaliana (Mouse-ear cress).